An 835-amino-acid chain; its full sequence is Translation initiation factor IF-2 (835 aa).

The segment at 1-240 (MSDSDGKKTL…RKQERARQKA (240 aa)) is disordered. Gly residues predominate over residues 50-59 (AGKGGAGGVA). A compositionally biased stretch (basic and acidic residues) spans 86 to 152 (KAREAEEAAQ…AEAAKKRAAA (67 aa)). Low complexity predominate over residues 153–169 (DKAAAAAPKSDAGVAPA). The segment covering 184-205 (RKAEREREERGRGAKGRNDGGR) has biased composition (basic and acidic residues). The tr-type G domain maps to 332–500 (PRPPVITIMG…AIALQAEILE (169 aa)). The segment at 341–348 (GHVDHGKT) is G1. 341–348 (GHVDHGKT) contributes to the GTP binding site. The segment at 366-370 (GITQH) is G2. Positions 388–391 (DTPG) are G3. GTP-binding positions include 388 to 392 (DTPGH) and 442 to 445 (NKID). The G4 stretch occupies residues 442–445 (NKID). Residues 478-480 (SAH) are G5.

Belongs to the TRAFAC class translation factor GTPase superfamily. Classic translation factor GTPase family. IF-2 subfamily.

It localises to the cytoplasm. Its function is as follows. One of the essential components for the initiation of protein synthesis. Protects formylmethionyl-tRNA from spontaneous hydrolysis and promotes its binding to the 30S ribosomal subunits. Also involved in the hydrolysis of GTP during the formation of the 70S ribosomal complex. The sequence is that of Translation initiation factor IF-2 from Ruegeria sp. (strain TM1040) (Silicibacter sp.).